A 142-amino-acid chain; its full sequence is Sorting nexin-3 (142 aa).

A PX domain is found at 21–138 (NFLEIEVRNP…AAFVQDPNWD (118 aa)). Residues Arg-64, Ser-66, Lys-90, Arg-95, and Arg-104 each contribute to the a 1,2-diacyl-sn-glycero-3-phospho-(1D-myo-inositol-3-phosphate) site.

The protein belongs to the sorting nexin family.

The protein resides in the cytoplasm. It localises to the golgi apparatus membrane. The protein localises to the prevacuolar compartment membrane. Functionally, required for retention of late Golgi membrane proteins. Component of the retrieval machinery that functions by direct interaction with the cytosolic tails of certain TGN membrane proteins during the sorting/budding process at the prevacuolar compartment. Binds phosphatidylinositol 3-phosphate (PtdIns(P3)). The polypeptide is Sorting nexin-3 (snx-3) (Neurospora crassa (strain ATCC 24698 / 74-OR23-1A / CBS 708.71 / DSM 1257 / FGSC 987)).